The following is a 129-amino-acid chain: Snaclec coagulation factor IX/factor X-binding protein subunit B3 (129 aa).

The first 8 residues, 1 to 8, serve as a signal peptide directing secretion; sequence LSLSGTAA. Intrachain disulfides connect cysteine 10/cysteine 21, cysteine 38/cysteine 127, and cysteine 104/cysteine 119. One can recognise a C-type lectin domain in the interval 17 to 128; that stretch reads YEGHCYKPFN…CRMMANFVCE (112 aa).

Belongs to the snaclec family. In terms of assembly, heterodimer of subunits A and B3; disulfide-linked. Expressed by the venom gland.

It localises to the secreted. In terms of biological role, anticoagulant protein which binds to the gamma-carboxyglutamic acid-domain regions of factors IX (F9) and factor X (F10) in the presence of calcium with a 1 to 1 stoichiometry. The polypeptide is Snaclec coagulation factor IX/factor X-binding protein subunit B3 (Trimeresurus stejnegeri (Chinese green tree viper)).